Consider the following 163-residue polypeptide: Cyclic pyranopterin monophosphate synthase (163 aa).

Substrate-binding positions include 76 to 78 (LCH) and 114 to 115 (ME). D129 is a catalytic residue.

This sequence belongs to the MoaC family. In terms of assembly, homohexamer; trimer of dimers.

It catalyses the reaction (8S)-3',8-cyclo-7,8-dihydroguanosine 5'-triphosphate = cyclic pyranopterin phosphate + diphosphate. The protein operates within cofactor biosynthesis; molybdopterin biosynthesis. In terms of biological role, catalyzes the conversion of (8S)-3',8-cyclo-7,8-dihydroguanosine 5'-triphosphate to cyclic pyranopterin monophosphate (cPMP). The chain is Cyclic pyranopterin monophosphate synthase from Desulfovibrio desulfuricans (strain ATCC 27774 / DSM 6949 / MB).